We begin with the raw amino-acid sequence, 242 residues long: MISDINALKYKKVLLKVSGEALMGDKQFGHEYDVIKKIAIDIKEVIDLGVEVAIVVGGGNIYRGINAALVGMDRASADYIGMLATVINALTLQNVMESLNIYTRVLSAIPMMSVCEPYIRRKAKRHMEKKRVVIFAGGTGNPFCTTDSAAVLRAIEMNCDILLKATQVDGVYDSDPKKNPDAKKYFTISYKDVITNNLQVMDTAAIAVARENKLPIRVFSIKEQGNFARVIQDKGEYTTIEA.

Residue 16–19 (KVSG) coordinates ATP. G58 serves as a coordination point for UMP. G59 and R63 together coordinate ATP. UMP contacts are provided by residues D78 and 139–146 (TGNPFCTT). The ATP site is built by T166, Q167, Y172, and D175.

The protein belongs to the UMP kinase family. Homohexamer.

The protein resides in the cytoplasm. The enzyme catalyses UMP + ATP = UDP + ADP. It participates in pyrimidine metabolism; CTP biosynthesis via de novo pathway; UDP from UMP (UMPK route): step 1/1. Inhibited by UTP. Functionally, catalyzes the reversible phosphorylation of UMP to UDP. In Rickettsia conorii (strain ATCC VR-613 / Malish 7), this protein is Uridylate kinase.